We begin with the raw amino-acid sequence, 348 residues long: Phosphate acyltransferase (348 aa).

Belongs to the PlsX family. Homodimer. Probably interacts with PlsY.

Its subcellular location is the cytoplasm. It carries out the reaction a fatty acyl-[ACP] + phosphate = an acyl phosphate + holo-[ACP]. It functions in the pathway lipid metabolism; phospholipid metabolism. Its function is as follows. Catalyzes the reversible formation of acyl-phosphate (acyl-PO(4)) from acyl-[acyl-carrier-protein] (acyl-ACP). This enzyme utilizes acyl-ACP as fatty acyl donor, but not acyl-CoA. The sequence is that of Phosphate acyltransferase from Neisseria gonorrhoeae (strain ATCC 700825 / FA 1090).